A 228-amino-acid chain; its full sequence is uncharacterized protein (228 aa).

Residues 1 to 16 (MILLLLALISATTAFQ) form the signal peptide. The chain crosses the membrane as a helical span at residues 206 to 225 (LFQTLFFVTLSFLVGSAFAL).

It to A.fulgidus AF_1225.

It localises to the membrane. This is an uncharacterized protein from Archaeoglobus fulgidus (strain ATCC 49558 / DSM 4304 / JCM 9628 / NBRC 100126 / VC-16).